We begin with the raw amino-acid sequence, 306 residues long: Recombination-associated protein RdgC (306 aa).

It belongs to the RdgC family.

It localises to the cytoplasm. The protein localises to the nucleoid. Functionally, may be involved in recombination. The sequence is that of Recombination-associated protein RdgC from Pseudomonas entomophila (strain L48).